A 206-amino-acid polypeptide reads, in one-letter code: Translation initiation factor IF-3 (206 aa).

It belongs to the IF-3 family. In terms of assembly, monomer.

Its subcellular location is the cytoplasm. Functionally, IF-3 binds to the 30S ribosomal subunit and shifts the equilibrium between 70S ribosomes and their 50S and 30S subunits in favor of the free subunits, thus enhancing the availability of 30S subunits on which protein synthesis initiation begins. The sequence is that of Translation initiation factor IF-3 from Chlorobium luteolum (strain DSM 273 / BCRC 81028 / 2530) (Pelodictyon luteolum).